The chain runs to 295 residues: Ethanolamine ammonia-lyase small subunit (295 aa).

3 residues coordinate adenosylcob(III)alamin: V207, E228, and C258.

This sequence belongs to the EutC family. The basic unit is a heterodimer which dimerizes to form tetramers. The heterotetramers trimerize; 6 large subunits form a core ring with 6 small subunits projecting outwards. It depends on adenosylcob(III)alamin as a cofactor.

It is found in the bacterial microcompartment. The catalysed reaction is ethanolamine = acetaldehyde + NH4(+). The protein operates within amine and polyamine degradation; ethanolamine degradation. In terms of biological role, catalyzes the deamination of various vicinal amino-alcohols to oxo compounds. Allows this organism to utilize ethanolamine as the sole source of nitrogen and carbon in the presence of external vitamin B12. This Escherichia coli O157:H7 protein is Ethanolamine ammonia-lyase small subunit.